A 306-amino-acid chain; its full sequence is Mitochondrial basic amino acids transporter (306 aa).

Transmembrane regions (helical) follow at residues 2-22 (ALDF…GHPF), 61-81 (GLGS…GVQG), 96-116 (FLAG…MELA), 153-172 (GMVS…FLTY), 187-207 (LLVP…WLST), and 255-275 (LLRA…VLTY). Solcar repeat units lie at residues 2 to 86 (ALDF…TLRA), 90 to 178 (DSPL…MTRA), and 190 to 275 (PKLL…VLTY). The interval 284–306 (DSEAALGTSPTPAGSALAQPSSL) is disordered. Residues 291–306 (TSPTPAGSALAQPSSL) show a composition bias toward polar residues.

The protein belongs to the mitochondrial carrier (TC 2.A.29) family. As to expression, widely expressed, with highest levels in the brain, including cortex, cerebellum, hippocampus and hypothalamus, and moderate levels in liver, kidney, heart and testis.

It is found in the mitochondrion inner membrane. It catalyses the reaction L-lysine(out) + L-arginine(in) = L-lysine(in) + L-arginine(out). The enzyme catalyses L-histidine(out) + L-arginine(in) = L-histidine(in) + L-arginine(out). The catalysed reaction is L-ornithine(in) + L-arginine(out) = L-ornithine(out) + L-arginine(in). It carries out the reaction L-homoarginine(in) + L-arginine(out) = L-homoarginine(out) + L-arginine(in). It catalyses the reaction N(omega)-methyl-L-arginine(in) + L-arginine(out) = N(omega)-methyl-L-arginine(out) + L-arginine(in). The enzyme catalyses L-arginine(in) = L-arginine(out). The catalysed reaction is L-lysine(in) = L-lysine(out). It carries out the reaction L-ornithine(in) = L-ornithine(out). It catalyses the reaction L-histidine(out) = L-histidine(in). Its function is as follows. Mitochondrial transporter of arginine, lysine, homoarginine, methylarginine. Transports with a much lesser extent, ornithine and histidine. Does not transport carnitine nor acylcarnitines. Functions by both counter-exchange and uniport mechanisms. Plays a physiological role in the import of basic amino acids into mitochondria for mitochondrial protein synthesis and amino acid degradation. This Mus musculus (Mouse) protein is Mitochondrial basic amino acids transporter (Slc25a29).